Here is a 585-residue protein sequence, read N- to C-terminus: MTKNVKKNIKDEINIIVTNLALSKNIKLDEININIQKPPKSDLGDISILIFELSKTLKLPIETISEEIIKALKAKYEIKAMGPYLNIKIPRKEYIHNTIQMVNAQKDTYGTSKYLDNKKIILEFSSPNTNKPLHVGHLRNDVIGESLSRILKAVGAKIIKLNLINDRGVHICKSMLAYKKFGNEITPEKAFKKGDHFIGDFYVQYNKYAQENENAEEEIQDLLLKWEQKDASTIELWKKLNNWAIEGIKETYKITNTSFDKIYLESEIFEIGKNVVLEGLEKGFCYKREDGAICIDLPLDSDEKTDTKVKQKVLIRSNGTSIYLTQDLGNIAVRIKEFNFEEMIYVVGSEQIQHFKNLFFVSEKLGISKNKKLFHLSHGMVNLVDGKMKSREGNVIDGDNLILDLMESILPEITQKIENKENAKKNALDIALGAIHYYLLKSAIHKDIVFNKKESLSFTGNSGPYIQYVGARINSILEKYNTLSIPIIKKINFELLEHEKEWDIIKIISELEENIIKAAKDLNPSILTSYSYSLAKHFSAYYQEVRVIDINNIDLTAARIEFLKAILQTIKNCMYLLNIPYMLKM.

Positions 127–137 (PNTNKPLHVGH) match the 'HIGH' region motif.

The protein belongs to the class-I aminoacyl-tRNA synthetase family. As to quaternary structure, monomer.

The protein resides in the cytoplasm. It carries out the reaction tRNA(Arg) + L-arginine + ATP = L-arginyl-tRNA(Arg) + AMP + diphosphate. The polypeptide is Arginine--tRNA ligase (Borreliella afzelii (strain PKo) (Borrelia afzelii)).